The sequence spans 502 residues: D-alanine--D-alanyl carrier protein ligase (502 aa).

Residue 150-151 (TS) participates in ATP binding. Asp195 is a binding site for D-alanine. 290 to 295 (NTYGPT) is an ATP binding site. Val299 lines the D-alanine pocket. The ATP site is built by Asp381 and Lys490. D-alanine is bound at residue Lys490.

The protein belongs to the ATP-dependent AMP-binding enzyme family. DltA subfamily.

Its subcellular location is the cytoplasm. It catalyses the reaction holo-[D-alanyl-carrier protein] + D-alanine + ATP = D-alanyl-[D-alanyl-carrier protein] + AMP + diphosphate. It participates in cell wall biogenesis; lipoteichoic acid biosynthesis. Its function is as follows. Catalyzes the first step in the D-alanylation of lipoteichoic acid (LTA), the activation of D-alanine and its transfer onto the D-alanyl carrier protein (Dcp) DltC. In an ATP-dependent two-step reaction, forms a high energy D-alanyl-AMP intermediate, followed by transfer of the D-alanyl residue as a thiol ester to the phosphopantheinyl prosthetic group of the Dcp. D-alanylation of LTA plays an important role in modulating the properties of the cell wall in Gram-positive bacteria, influencing the net charge of the cell wall. The polypeptide is D-alanine--D-alanyl carrier protein ligase (Bacillus licheniformis (strain ATCC 14580 / DSM 13 / JCM 2505 / CCUG 7422 / NBRC 12200 / NCIMB 9375 / NCTC 10341 / NRRL NRS-1264 / Gibson 46)).